A 194-amino-acid polypeptide reads, in one-letter code: Phosphoheptose isomerase (194 aa).

The 155-residue stretch at 34–188 folds into the SIS domain; it reads LANIFTKGKK…IEGVERIMFP (155 aa). Position 49–51 (49–51) interacts with substrate; it reads NGG. 2 residues coordinate Zn(2+): H58 and E62. Residues E62, 90-91, 116-118, S121, and Q168 each bind substrate; these read ND and STS. The Zn(2+) site is built by Q168 and H176.

This sequence belongs to the SIS family. GmhA subfamily. The cofactor is Zn(2+).

It is found in the cytoplasm. The catalysed reaction is 2 D-sedoheptulose 7-phosphate = D-glycero-alpha-D-manno-heptose 7-phosphate + D-glycero-beta-D-manno-heptose 7-phosphate. It participates in carbohydrate biosynthesis; D-glycero-D-manno-heptose 7-phosphate biosynthesis; D-glycero-alpha-D-manno-heptose 7-phosphate and D-glycero-beta-D-manno-heptose 7-phosphate from sedoheptulose 7-phosphate: step 1/1. Catalyzes the isomerization of sedoheptulose 7-phosphate in D-glycero-D-manno-heptose 7-phosphate. This chain is Phosphoheptose isomerase, found in Fusobacterium nucleatum subsp. nucleatum (strain ATCC 25586 / DSM 15643 / BCRC 10681 / CIP 101130 / JCM 8532 / KCTC 2640 / LMG 13131 / VPI 4355).